The sequence spans 1375 residues: Probable GMP synthase [glutamine-hydrolyzing] (1375 aa).

The 113-residue stretch at 7-119 folds into the Glutamine amidotransferase type-1; first part domain; the sequence is QILVLDFGSQ…VLEIMESSQD (113 aa). The active-site Nucleophile is Cys84. Residues 120-500 are insert-1; the sequence is SKDSSCFAFQ…NNATQGFKSC (381 aa). N-acetyltransferase domains follow at residues 141 to 300 and 318 to 484; these read LSFD…KALE and VFLR…LEKK. The Glutamine amidotransferase type-1; second part domain occupies 501–580; that stretch reads SLFKGIKQDS…AVGICGANTC (80 aa). Catalysis depends on residues His554 and Glu556. Residues 597–1071 form an insert-2 region; sequence IVYGGKAHCE…SGVANSLKIT (475 aa). In terms of domain architecture, N-acetyltransferase 3 spans 612–765; that stretch reads MQIQEAFKHI…ELIPLSIARE (154 aa). A disordered region spans residues 1011–1036; that stretch reads RIVDSQHTESSDIKGQSHLESSADSG. The span at 1014–1027 shows a compositional bias: basic and acidic residues; sequence DSQHTESSDIKGQS. The GMPS ATP-PPase domain maps to 1055–1250; that stretch reads YLEGNDRSGV…LGMPESMLMR (196 aa). Residue 1083–1089 coordinates ATP; the sequence is SGGVDSS.

As to quaternary structure, homodimer.

The enzyme catalyses XMP + L-glutamine + ATP + H2O = GMP + L-glutamate + AMP + diphosphate + 2 H(+). It functions in the pathway purine metabolism; GMP biosynthesis; GMP from XMP (L-Gln route): step 1/1. Functionally, catalyzes the synthesis of GMP from XMP. This chain is Probable GMP synthase [glutamine-hydrolyzing] (guaA), found in Helicobacter hepaticus (strain ATCC 51449 / 3B1).